The primary structure comprises 226 residues: V-type proton ATPase subunit E 2 (226 aa).

The protein belongs to the V-ATPase E subunit family. V-ATPase is a heteromultimeric enzyme made up of two complexes: the ATP-hydrolytic V1 complex and the proton translocation V0 complex. The V1 complex consists of three catalytic AB heterodimers that form a heterohexamer, three peripheral stalks each consisting of EG heterodimers, one central rotor including subunits D and F, and the regulatory subunits C and H. The proton translocation complex V0 consists of the proton transport subunit a, a ring of proteolipid subunits c9c'', rotary subunit d, subunits e and f, and the accessory subunits ATP6AP1/Ac45 and ATP6AP2/PRR.

Subunit of the V1 complex of vacuolar(H+)-ATPase (V-ATPase), a multisubunit enzyme composed of a peripheral complex (V1) that hydrolyzes ATP and a membrane integral complex (V0) that translocates protons. V-ATPase is responsible for acidifying and maintaining the pH of intracellular compartments and in some cell types, is targeted to the plasma membrane, where it is responsible for acidifying the extracellular environment. This chain is V-type proton ATPase subunit E 2 (ATP6V1E2), found in Bos taurus (Bovine).